We begin with the raw amino-acid sequence, 76 residues long: MKNILFRINELSKKEKATGLTVDEKQEQQMLRQNYTQTFRGSLDSILLNTKIVDQNGLNVTPAALQDAQIRLKLSK.

Belongs to the UPF0291 family.

The protein localises to the cytoplasm. The polypeptide is UPF0291 protein BT9727_1737 (Bacillus thuringiensis subsp. konkukian (strain 97-27)).